An 81-amino-acid polypeptide reads, in one-letter code: ATP synthase subunit c (81 aa).

2 consecutive transmembrane segments (helical) span residues 4–24 and 57–77; these read MIAQGALIGGGLIMAGGAIGA and VGLVEAAYFINLAFMALFVFA.

The protein belongs to the ATPase C chain family. As to quaternary structure, F-type ATPases have 2 components, F(1) - the catalytic core - and F(0) - the membrane proton channel. F(1) has five subunits: alpha(3), beta(3), gamma(1), delta(1), epsilon(1). F(0) has three main subunits: a(1), b(2) and c(10-14). The alpha and beta chains form an alternating ring which encloses part of the gamma chain. F(1) is attached to F(0) by a central stalk formed by the gamma and epsilon chains, while a peripheral stalk is formed by the delta and b chains.

The protein resides in the cell membrane. In terms of biological role, f(1)F(0) ATP synthase produces ATP from ADP in the presence of a proton or sodium gradient. F-type ATPases consist of two structural domains, F(1) containing the extramembraneous catalytic core and F(0) containing the membrane proton channel, linked together by a central stalk and a peripheral stalk. During catalysis, ATP synthesis in the catalytic domain of F(1) is coupled via a rotary mechanism of the central stalk subunits to proton translocation. Functionally, key component of the F(0) channel; it plays a direct role in translocation across the membrane. A homomeric c-ring of between 10-14 subunits forms the central stalk rotor element with the F(1) delta and epsilon subunits. This is ATP synthase subunit c from Mycobacterium leprae (strain TN).